Consider the following 54-residue polypeptide: Large ribosomal subunit protein bL33 (54 aa).

The protein belongs to the bacterial ribosomal protein bL33 family.

This Herpetosiphon aurantiacus (strain ATCC 23779 / DSM 785 / 114-95) protein is Large ribosomal subunit protein bL33.